The primary structure comprises 349 residues: MIAFDQLTWLHGKPQSSGLLKANPEDFLVVEDLGFAPDGEGEHVLVRILKNGCNTRFVADALAKFLKIHAREVSFAGQKDKHAVTEQWLCARVPGKEMPDLSKFQLEGCQVLEYARHKRKLRLGALKGNQFTVILREISHRQDVETRLQAIAERGVPNYFGAQRFGIGGSNLQGALRWAESDAPVRDRNKRSFWLSAARSALFNQQVSIRLKKTEFNQVVDGDALQLAGRGSWFVVTPEELEVSQARVHNRELMITAALPGSGDWGSQRDALAAEQAAIAEETSLQALLVREKVEAARRAMLLYPQQLSWNWWDDVTVELRFWLPAGSFATSVVRELINTTGDYANIAE.

Residue F27 participates in substrate binding. The Nucleophile role is filled by D80. N129 contacts substrate. The TRUD domain maps to 155 to 303; the sequence is GVPNYFGAQR…VEAARRAMLL (149 aa). F329 lines the substrate pocket.

Belongs to the pseudouridine synthase TruD family.

It carries out the reaction uridine(13) in tRNA = pseudouridine(13) in tRNA. Responsible for synthesis of pseudouridine from uracil-13 in transfer RNAs. The polypeptide is tRNA pseudouridine synthase D (Klebsiella pneumoniae (strain 342)).